A 198-amino-acid polypeptide reads, in one-letter code: Ribonuclease HII (198 aa).

An RNase H type-2 domain is found at 10 to 198 (QLVAGVDEVG…PVKRALGLAS (189 aa)). Residues Asp-16, Glu-17, and Asp-108 each coordinate a divalent metal cation.

Belongs to the RNase HII family. Mn(2+) is required as a cofactor. The cofactor is Mg(2+).

The protein localises to the cytoplasm. It catalyses the reaction Endonucleolytic cleavage to 5'-phosphomonoester.. Functionally, endonuclease that specifically degrades the RNA of RNA-DNA hybrids. The sequence is that of Ribonuclease HII from Escherichia coli O6:H1 (strain CFT073 / ATCC 700928 / UPEC).